Here is a 101-residue protein sequence, read N- to C-terminus: Small ribosomal subunit protein uS14 (101 aa).

Belongs to the universal ribosomal protein uS14 family. In terms of assembly, part of the 30S ribosomal subunit. Contacts proteins S3 and S10.

In terms of biological role, binds 16S rRNA, required for the assembly of 30S particles and may also be responsible for determining the conformation of the 16S rRNA at the A site. In Pelagibacter ubique (strain HTCC1062), this protein is Small ribosomal subunit protein uS14.